The sequence spans 429 residues: DNA primase DnaG (429 aa).

One can recognise a Toprim domain in the interval 172–246 (DSIIVVEGRN…DVDFIARAPP (75 aa)). Positions 178, 220, and 222 each coordinate Mg(2+). A disordered region spans residues 287-322 (RNTKELEERQGNELKNERPEKINENEESEKNVELKE).

This sequence belongs to the archaeal DnaG primase family. Forms a ternary complex with MCM helicase and DNA. Component of the archaeal exosome complex. Mg(2+) serves as cofactor.

The enzyme catalyses ssDNA + n NTP = ssDNA/pppN(pN)n-1 hybrid + (n-1) diphosphate.. In terms of biological role, RNA polymerase that catalyzes the synthesis of short RNA molecules used as primers for DNA polymerase during DNA replication. Also part of the exosome, which is a complex involved in RNA degradation. Acts as a poly(A)-binding protein that enhances the interaction between heteromeric, adenine-rich transcripts and the exosome. This Picrophilus torridus (strain ATCC 700027 / DSM 9790 / JCM 10055 / NBRC 100828 / KAW 2/3) protein is DNA primase DnaG.